The sequence spans 213 residues: Nucleoside triphosphate pyrophosphatase (213 aa).

Catalysis depends on Asp77, which acts as the Proton acceptor.

Belongs to the Maf family. Requires a divalent metal cation as cofactor.

Its subcellular location is the cytoplasm. The enzyme catalyses a ribonucleoside 5'-triphosphate + H2O = a ribonucleoside 5'-phosphate + diphosphate + H(+). It carries out the reaction a 2'-deoxyribonucleoside 5'-triphosphate + H2O = a 2'-deoxyribonucleoside 5'-phosphate + diphosphate + H(+). In terms of biological role, nucleoside triphosphate pyrophosphatase. May have a dual role in cell division arrest and in preventing the incorporation of modified nucleotides into cellular nucleic acids. The sequence is that of Nucleoside triphosphate pyrophosphatase from Cutibacterium acnes (strain DSM 16379 / KPA171202) (Propionibacterium acnes).